Consider the following 468-residue polypeptide: Aspartate ammonia-lyase (468 aa).

5 residues coordinate L-aspartate: threonine 99, serine 138, threonine 139, asparagine 140, and threonine 185. The segment at 315–324 is SS loop; the sequence is GSSIMPGKVN. The active-site Proton acceptor is the serine 316. Residues serine 317 and lysine 322 each contribute to the L-aspartate site.

The protein belongs to the class-II fumarase/aspartase family. Aspartase subfamily. As to quaternary structure, homotetramer.

The catalysed reaction is L-aspartate = fumarate + NH4(+). In terms of biological role, catalyzes the reversible conversion of L-aspartate to fumarate and ammonia. The sequence is that of Aspartate ammonia-lyase (aspA) from Helicobacter pylori (strain J99 / ATCC 700824) (Campylobacter pylori J99).